The primary structure comprises 331 residues: Aspartate carbamoyltransferase catalytic subunit (331 aa).

Residues R55 and T56 each contribute to the carbamoyl phosphate site. K84 provides a ligand contact to L-aspartate. R105, H133, and Q136 together coordinate carbamoyl phosphate. Positions 166 and 229 each coordinate L-aspartate. Carbamoyl phosphate is bound by residues L268 and P269.

The protein belongs to the aspartate/ornithine carbamoyltransferase superfamily. ATCase family. As to quaternary structure, heterododecamer (2C3:3R2) of six catalytic PyrB chains organized as two trimers (C3), and six regulatory PyrI chains organized as three dimers (R2).

The enzyme catalyses carbamoyl phosphate + L-aspartate = N-carbamoyl-L-aspartate + phosphate + H(+). The protein operates within pyrimidine metabolism; UMP biosynthesis via de novo pathway; (S)-dihydroorotate from bicarbonate: step 2/3. Functionally, catalyzes the condensation of carbamoyl phosphate and aspartate to form carbamoyl aspartate and inorganic phosphate, the committed step in the de novo pyrimidine nucleotide biosynthesis pathway. The polypeptide is Aspartate carbamoyltransferase catalytic subunit (Alkaliphilus oremlandii (strain OhILAs) (Clostridium oremlandii (strain OhILAs))).